A 366-amino-acid chain; its full sequence is Protein-glutamate methylesterase/protein-glutamine glutaminase of group 2 operon (366 aa).

In terms of domain architecture, Response regulatory spans Arg-19 to Asp-136. Asp-70 bears the 4-aspartylphosphate mark. In terms of domain architecture, CheB-type methylesterase spans Pro-162–Asp-356. Catalysis depends on residues Ser-175, His-201, and Asp-298.

Belongs to the CheB family. In terms of processing, phosphorylated by CheA. Phosphorylation of the N-terminal regulatory domain activates the methylesterase activity.

It localises to the cytoplasm. It carries out the reaction [protein]-L-glutamate 5-O-methyl ester + H2O = L-glutamyl-[protein] + methanol + H(+). It catalyses the reaction L-glutaminyl-[protein] + H2O = L-glutamyl-[protein] + NH4(+). Its function is as follows. Involved in chemotaxis. Part of a chemotaxis signal transduction system that modulates chemotaxis in response to various stimuli. Catalyzes the demethylation of specific methylglutamate residues introduced into the chemoreceptors (methyl-accepting chemotaxis proteins or MCP) by CheR. Also mediates the irreversible deamidation of specific glutamine residues to glutamic acid. The protein is Protein-glutamate methylesterase/protein-glutamine glutaminase of group 2 operon of Cereibacter sphaeroides (Rhodobacter sphaeroides).